Consider the following 633-residue polypeptide: Extracellular metalloproteinase mep (633 aa).

Residues 1-18 (MRLLSLAGAMALPLCVLA) form the signal peptide. Positions 19–244 (HPTHRTRGIA…IHGVVDYISD (226 aa)) are excised as a propeptide. Asn-326 is a glycosylation site (N-linked (GlcNAc...) asparagine). His-428 lines the Zn(2+) pocket. Glu-429 is a catalytic residue. Position 432 (His-432) interacts with Zn(2+). N-linked (GlcNAc...) asparagine glycosylation is present at Asn-514.

It belongs to the peptidase M36 family. Zn(2+) is required as a cofactor.

It localises to the secreted. Its function is as follows. Secreted metalloproteinase that allows assimilation of proteinaceous substrates. The polypeptide is Extracellular metalloproteinase mep (mep) (Aspergillus terreus (strain NIH 2624 / FGSC A1156)).